A 776-amino-acid polypeptide reads, in one-letter code: Endonuclease MutS2 (776 aa).

330–337 serves as a coordination point for ATP; sequence GPNTGGKT. The 76-residue stretch at 701 to 776 folds into the Smr domain; the sequence is LDLRGMRYEE…GSGATIAILK (76 aa).

The protein belongs to the DNA mismatch repair MutS family. MutS2 subfamily. As to quaternary structure, homodimer. Binds to stalled ribosomes, contacting rRNA.

Functionally, endonuclease that is involved in the suppression of homologous recombination and thus may have a key role in the control of bacterial genetic diversity. Acts as a ribosome collision sensor, splitting the ribosome into its 2 subunits. Detects stalled/collided 70S ribosomes which it binds and splits by an ATP-hydrolysis driven conformational change. Acts upstream of the ribosome quality control system (RQC), a ribosome-associated complex that mediates the extraction of incompletely synthesized nascent chains from stalled ribosomes and their subsequent degradation. Probably generates substrates for RQC. This is Endonuclease MutS2 from Lactococcus lactis subsp. cremoris (strain MG1363).